The sequence spans 276 residues: Rhomboid protease GlpG (276 aa).

Transmembrane regions (helical) follow at residues G94 to L114, A142 to G162, I169 to Q189, F192 to W212, L229 to I249, and G252 to G272. S201 serves as the catalytic Nucleophile. H254 is an active-site residue.

This sequence belongs to the peptidase S54 family.

The protein localises to the cell inner membrane. The enzyme catalyses Cleaves type-1 transmembrane domains using a catalytic dyad composed of serine and histidine that are contributed by different transmembrane domains.. Functionally, rhomboid-type serine protease that catalyzes intramembrane proteolysis. The protein is Rhomboid protease GlpG of Klebsiella pneumoniae (strain 342).